The chain runs to 263 residues: Ubiquinone/menaquinone biosynthesis C-methyltransferase UbiE (263 aa).

The S-adenosyl-L-methionine site is built by Thr-86, Asp-107, and Ser-152.

The protein belongs to the class I-like SAM-binding methyltransferase superfamily. MenG/UbiE family.

It catalyses the reaction a 2-demethylmenaquinol + S-adenosyl-L-methionine = a menaquinol + S-adenosyl-L-homocysteine + H(+). The catalysed reaction is a 2-methoxy-6-(all-trans-polyprenyl)benzene-1,4-diol + S-adenosyl-L-methionine = a 5-methoxy-2-methyl-3-(all-trans-polyprenyl)benzene-1,4-diol + S-adenosyl-L-homocysteine + H(+). The protein operates within quinol/quinone metabolism; menaquinone biosynthesis; menaquinol from 1,4-dihydroxy-2-naphthoate: step 2/2. It participates in cofactor biosynthesis; ubiquinone biosynthesis. Its function is as follows. Methyltransferase required for the conversion of demethylmenaquinol (DMKH2) to menaquinol (MKH2) and the conversion of 2-polyprenyl-6-methoxy-1,4-benzoquinol (DDMQH2) to 2-polyprenyl-3-methyl-6-methoxy-1,4-benzoquinol (DMQH2). This Brucella anthropi (strain ATCC 49188 / DSM 6882 / CCUG 24695 / JCM 21032 / LMG 3331 / NBRC 15819 / NCTC 12168 / Alc 37) (Ochrobactrum anthropi) protein is Ubiquinone/menaquinone biosynthesis C-methyltransferase UbiE.